Here is a 169-residue protein sequence, read N- to C-terminus: Probable inosine/xanthosine triphosphatase (169 aa).

7 to 12 (STNKAK) lines the substrate pocket. Mg(2+) is bound at residue Glu35.

The protein belongs to the YjjX NTPase family. In terms of assembly, homodimer. The cofactor is Mg(2+). Mn(2+) is required as a cofactor.

The catalysed reaction is XTP + H2O = XDP + phosphate + H(+). The enzyme catalyses ITP + H2O = IDP + phosphate + H(+). Its function is as follows. Phosphatase that hydrolyzes non-canonical purine nucleotides such as XTP and ITP to their respective diphosphate derivatives. Probably excludes non-canonical purines from DNA/RNA precursor pool, thus preventing their incorporation into DNA/RNA and avoiding chromosomal lesions. This chain is Probable inosine/xanthosine triphosphatase, found in Sulfurisphaera tokodaii (strain DSM 16993 / JCM 10545 / NBRC 100140 / 7) (Sulfolobus tokodaii).